The following is a 448-amino-acid chain: Velvet complex subunit 2 (448 aa).

2 disordered regions span residues 1-153 (MNSA…SKIE) and 224-306 (EPGT…NGYG). The span at 15–34 (PGPAYSSSAPPPIHTYQQHQ) shows a compositional bias: low complexity. 2 stretches are compositionally biased toward pro residues: residues 35 to 44 (HPPPPLPPPS) and 52 to 61 (PPLPPPPSAP). A compositionally biased stretch (low complexity) spans 96–107 (APYQQSQPSQYP). Residues 116 to 132 (VPPPSQHDEPPPPPSSG) are compositionally biased toward pro residues. Positions 155–431 (GSGWKYSLDV…ANQGIKIPIR (277 aa)) constitute a Velvet domain. Residues 260–292 (QQSYGPAPSYPPSSSYGPPQQYYPRHSGYSAEP) are compositionally biased toward low complexity.

Belongs to the velvet family. VelB subfamily. Component of the heterotrimeric velvet complex composed of LAE1, VE1 and VELB; VE1 acting as a bridging protein between LAE1 and VEL2. Interacts with VE1. Forms a heterodimeric complex with VOS1; the formation of the VELB-VOS1 complex is light-dependent.

It localises to the nucleus. The protein localises to the cytoplasm. Component of the velvet transcription factor complex that controls sexual/asexual developmental ratio in response to light, promoting sexual development in the darkness while stimulating asexual sporulation under illumination. The velvet complex acts as a global regulator for secondary metabolite gene expression. Component of the VELB-VOS1 heterodimeric complex that plays a dual role in activating genes associated with spore maturation and repressing certain development-associated genes. The VELB-VOS1 complex binds DNA through the DNA-binding domain of VOS1 that recognizes an 11-nucleotide consensus sequence 5'-CTGGCCGCGGC-3' consisting of two motifs in the promoters of key developmental regulatory genes. Controls the expression of the fumonisins gene cluster. Involved in cell wall integrity, cell surface hydrophobicity, hyphal polarity and conidiation pattern. Involved in oxidative stress resistance by positively regulating the transcription of the catalase-encoding gene CAT2. The protein is Velvet complex subunit 2 of Gibberella moniliformis (strain M3125 / FGSC 7600) (Maize ear and stalk rot fungus).